The chain runs to 220 residues: Glutathione S-transferase 2 (220 aa).

Residues 2–88 enclose the GST N-terminal domain; it reads VVTLGYWDIR…YIARKHNMCG (87 aa). Residues 7–8, 43–46, Lys-50, 59–60, and 72–73 each bind glutathione; these read YW, PSDW, NL, and QS. Residues 90–208 enclose the GST C-terminal domain; it reads TEVEKQRVDV…RSGRFMKAPI (119 aa). Tyr-116 provides a ligand contact to substrate.

This sequence belongs to the GST superfamily. Mu family. As to quaternary structure, homodimer.

The protein localises to the cytoplasm. It catalyses the reaction RX + glutathione = an S-substituted glutathione + a halide anion + H(+). Conjugation of reduced glutathione to a wide number of exogenous and endogenous hydrophobic electrophiles. Participates in the formation of novel hepoxilin regioisomers. The chain is Glutathione S-transferase 2 (GSTM2) from Gallus gallus (Chicken).